Reading from the N-terminus, the 212-residue chain is MSLFDKKHLVSPADALPGRNTPMPVATLHAVNGHSMTNVPDGMEIAIFAMGCFWGVERLFWQLPGVYSTAAGYTGGYTPNPTYREVCSGDTGHAEAVRIVYDPSVISYEQLLQVFWENHDPAQGMRQGNDHGTQYRSAIYPLTPEQDAAARASLERFQAAMLAADDDRRITTEIANATPFYYAEDDHQQYLHKNPYGYCGIGGIGVCLPPEA.

C52 is an active-site residue.

This sequence belongs to the MsrA Met sulfoxide reductase family.

The enzyme catalyses L-methionyl-[protein] + [thioredoxin]-disulfide + H2O = L-methionyl-(S)-S-oxide-[protein] + [thioredoxin]-dithiol. It carries out the reaction [thioredoxin]-disulfide + L-methionine + H2O = L-methionine (S)-S-oxide + [thioredoxin]-dithiol. Has an important function as a repair enzyme for proteins that have been inactivated by oxidation. Catalyzes the reversible oxidation-reduction of methionine sulfoxide in proteins to methionine. The polypeptide is Peptide methionine sulfoxide reductase MsrA (Escherichia coli O17:K52:H18 (strain UMN026 / ExPEC)).